A 310-amino-acid chain; its full sequence is Ribosomal protein uL3 glutamine methyltransferase (310 aa).

It belongs to the protein N5-glutamine methyltransferase family. PrmB subfamily.

The enzyme catalyses L-glutaminyl-[ribosomal protein uL3] + S-adenosyl-L-methionine = N(5)-methyl-L-glutaminyl-[ribosomal protein uL3] + S-adenosyl-L-homocysteine + H(+). In terms of biological role, methylates large ribosomal subunit protein uL3 on a specific glutamine residue. This Yersinia pestis protein is Ribosomal protein uL3 glutamine methyltransferase.